The primary structure comprises 175 residues: B9 domain-containing protein 2 (175 aa).

The C2 B9-type domain occupies 2–118 (AEVHVIGQII…DCPTWRPLGS (117 aa)).

The protein belongs to the B9D family. Part of the tectonic-like complex (also named B9 complex). Interacts with TUBG1. Highest expression in thymus and skeletal muscle. Also expressed in spleen, kidney, lung, heart, microglia and liver. Detected in brain (at protein level).

It is found in the cytoplasm. The protein localises to the cytoskeleton. It localises to the cilium basal body. The protein resides in the cilium axoneme. Its subcellular location is the nucleus. In terms of biological role, component of the tectonic-like complex, a complex localized at the transition zone of primary cilia and acting as a barrier that prevents diffusion of transmembrane proteins between the cilia and plasma membranes. The sequence is that of B9 domain-containing protein 2 (B9d2) from Mus musculus (Mouse).